The following is a 248-amino-acid chain: Type II methyltransferase M.AquIA (248 aa).

Residues 3 to 248 (KKLISLFSGA…IKDRIKNHGY (246 aa)) enclose the SAM-dependent MTase C5-type domain. Residue C82 is part of the active site.

Belongs to the class I-like SAM-binding methyltransferase superfamily. C5-methyltransferase family. As to quaternary structure, heterodimer of an alpha and a beta subunit.

The enzyme catalyses a 2'-deoxycytidine in DNA + S-adenosyl-L-methionine = a 5-methyl-2'-deoxycytidine in DNA + S-adenosyl-L-homocysteine + H(+). Functionally, a methylase, recognizes the double-stranded sequence 5'-CYCGRG-3', methylates C-1 on both strands, and protects the DNA from cleavage by the AquI endonuclease. The chain is Type II methyltransferase M.AquIA (aquIMA) from Picosynechococcus sp. (strain ATCC 27264 / PCC 7002 / PR-6) (Agmenellum quadruplicatum).